The sequence spans 210 residues: Large ribosomal subunit protein uL3 (210 aa).

The protein belongs to the universal ribosomal protein uL3 family. In terms of assembly, part of the 50S ribosomal subunit. Forms a cluster with proteins L14 and L19.

Its function is as follows. One of the primary rRNA binding proteins, it binds directly near the 3'-end of the 23S rRNA, where it nucleates assembly of the 50S subunit. The chain is Large ribosomal subunit protein uL3 from Caldicellulosiruptor saccharolyticus (strain ATCC 43494 / DSM 8903 / Tp8T 6331).